Here is a 182-residue protein sequence, read N- to C-terminus: Translation initiation factor IF-3, chloroplastic (182 aa).

It belongs to the IF-3 family. As to quaternary structure, monomer.

It localises to the plastid. It is found in the chloroplast. Functionally, IF-3 binds to the 30S ribosomal subunit and shifts the equilibrium between 70S ribosomes and their 50S and 30S subunits in favor of the free subunits, thus enhancing the availability of 30S subunits on which protein synthesis initiation begins. The chain is Translation initiation factor IF-3, chloroplastic from Porphyra purpurea (Red seaweed).